A 343-amino-acid polypeptide reads, in one-letter code: Protein RecA (343 aa).

It belongs to the RecA family.

It is found in the cytoplasm. Can catalyze the hydrolysis of ATP in the presence of single-stranded DNA, the ATP-dependent uptake of single-stranded DNA by duplex DNA, and the ATP-dependent hybridization of homologous single-stranded DNAs. It interacts with LexA causing its activation and leading to its autocatalytic cleavage. The chain is Protein RecA from Coxiella burnetii (strain RSA 493 / Nine Mile phase I).